A 185-amino-acid chain; its full sequence is Acireductone dioxygenase (185 aa).

The segment at 1–22 is disordered; that stretch reads MSRLSIHPEGSTNATSPAEPLL. Fe(2+) contacts are provided by His102, His104, Glu108, and His146. Residues His102, His104, Glu108, and His146 each coordinate Ni(2+).

This sequence belongs to the acireductone dioxygenase (ARD) family. As to quaternary structure, monomer. It depends on Fe(2+) as a cofactor. Ni(2+) is required as a cofactor.

The enzyme catalyses 1,2-dihydroxy-5-(methylsulfanyl)pent-1-en-3-one + O2 = 3-(methylsulfanyl)propanoate + CO + formate + 2 H(+). The catalysed reaction is 1,2-dihydroxy-5-(methylsulfanyl)pent-1-en-3-one + O2 = 4-methylsulfanyl-2-oxobutanoate + formate + 2 H(+). The protein operates within amino-acid biosynthesis; L-methionine biosynthesis via salvage pathway; L-methionine from S-methyl-5-thio-alpha-D-ribose 1-phosphate: step 5/6. Its function is as follows. Catalyzes 2 different reactions between oxygen and the acireductone 1,2-dihydroxy-3-keto-5-methylthiopentene (DHK-MTPene) depending upon the metal bound in the active site. Fe-containing acireductone dioxygenase (Fe-ARD) produces formate and 2-keto-4-methylthiobutyrate (KMTB), the alpha-ketoacid precursor of methionine in the methionine recycle pathway. Ni-containing acireductone dioxygenase (Ni-ARD) produces methylthiopropionate, carbon monoxide and formate, and does not lie on the methionine recycle pathway. The protein is Acireductone dioxygenase of Prochlorococcus marinus (strain MIT 9313).